A 254-amino-acid polypeptide reads, in one-letter code: 14-3-3-like protein GF14 epsilon (254 aa).

Residues serine 65 and serine 188 each carry the phosphoserine modification.

Belongs to the 14-3-3 family. As to quaternary structure, interacts with DREB1A and DREB1B in the nucleus. Interacts with CINV1.

The protein localises to the nucleus. It localises to the cytoplasm. Functionally, is associated with a DNA binding complex that binds to the G box, a well-characterized cis-acting DNA regulatory element found in plant genes. This Arabidopsis thaliana (Mouse-ear cress) protein is 14-3-3-like protein GF14 epsilon (GRF10).